We begin with the raw amino-acid sequence, 111 residues long: Cell division protein FtsB (111 aa).

Topologically, residues 1 to 3 (MRL) are cytoplasmic. Residues 4 to 21 (ITLFLLLLLLAIQYPLWL) form a helical membrane-spanning segment. Over 22–111 (GKGGWLRVWD…PAALQPNHRH (90 aa)) the chain is Periplasmic. Residues 28-64 (RVWDMQKQVASQNQRNAELKQRNLKLEGEVKDLKEGT) adopt a coiled-coil conformation. The tract at residues 90–111 (PAPKTSETPLPPPAALQPNHRH) is disordered.

This sequence belongs to the FtsB family. Part of a complex composed of FtsB, FtsL and FtsQ.

Its subcellular location is the cell inner membrane. In terms of biological role, essential cell division protein. May link together the upstream cell division proteins, which are predominantly cytoplasmic, with the downstream cell division proteins, which are predominantly periplasmic. The polypeptide is Cell division protein FtsB (Ralstonia nicotianae (strain ATCC BAA-1114 / GMI1000) (Ralstonia solanacearum)).